The following is a 35-amino-acid chain: uncharacterized protein (35 aa).

A helical transmembrane segment spans residues 10–30; it reads LMITASFFAIFIIIVVSVLLL.

The protein resides in the membrane. This is an uncharacterized protein from Salmonella typhimurium (strain LT2 / SGSC1412 / ATCC 700720).